A 248-amino-acid polypeptide reads, in one-letter code: DNA repair protein RecO (248 aa).

It belongs to the RecO family.

Involved in DNA repair and RecF pathway recombination. This chain is DNA repair protein RecO, found in Bradyrhizobium sp. (strain BTAi1 / ATCC BAA-1182).